A 127-amino-acid chain; its full sequence is Apolipoprotein C-IV (127 aa).

Residues 1-27 (MSLLRNRLQDLPALCLCVLVLACIGAC) form the signal peptide.

This sequence belongs to the apolipoprotein C4 family.

The protein resides in the secreted. In terms of biological role, may participate in lipoprotein metabolism. This Chlorocebus sabaeus (Green monkey) protein is Apolipoprotein C-IV (APOC4).